We begin with the raw amino-acid sequence, 537 residues long: CTP synthase (537 aa).

The interval 1 to 268 (MSFKCIFLTG…STFITEKLGL (268 aa)) is amidoligase domain. Serine 14 is a binding site for CTP. Serine 14 is a binding site for UTP. ATP is bound at residue 15–20 (SLGKGL). L-glutamine is bound at residue tyrosine 55. Position 72 (aspartate 72) interacts with ATP. Mg(2+) is bound by residues aspartate 72 and glutamate 142. Residues 149-151 (DIE), 188-193 (KTKPTQ), and lysine 224 each bind CTP. UTP contacts are provided by residues 188–193 (KTKPTQ) and lysine 224. The Glutamine amidotransferase type-1 domain occupies 294 to 533 (RLGLVGKYVQ…IEAALLHSRN (240 aa)). Glycine 353 contributes to the L-glutamine binding site. Cysteine 380 (nucleophile; for glutamine hydrolysis) is an active-site residue. Residues 381–384 (LGMQ), glutamate 404, and arginine 461 contribute to the L-glutamine site. Active-site residues include histidine 506 and glutamate 508.

This sequence belongs to the CTP synthase family. Homotetramer.

The enzyme catalyses UTP + L-glutamine + ATP + H2O = CTP + L-glutamate + ADP + phosphate + 2 H(+). It carries out the reaction L-glutamine + H2O = L-glutamate + NH4(+). It catalyses the reaction UTP + NH4(+) + ATP = CTP + ADP + phosphate + 2 H(+). It participates in pyrimidine metabolism; CTP biosynthesis via de novo pathway; CTP from UDP: step 2/2. Allosterically activated by GTP, when glutamine is the substrate; GTP has no effect on the reaction when ammonia is the substrate. The allosteric effector GTP functions by stabilizing the protein conformation that binds the tetrahedral intermediate(s) formed during glutamine hydrolysis. Inhibited by the product CTP, via allosteric rather than competitive inhibition. In terms of biological role, catalyzes the ATP-dependent amination of UTP to CTP with either L-glutamine or ammonia as the source of nitrogen. Regulates intracellular CTP levels through interactions with the four ribonucleotide triphosphates. This chain is CTP synthase, found in Chlamydia abortus (strain DSM 27085 / S26/3) (Chlamydophila abortus).